The following is a 554-amino-acid chain: MTPLIFVTGGVVSSLGKGIAAASLASILEARGLKVTMMKLDPYINVDPGTMSPFQHGEVYVTDDGAETDLDLGHYERYVRTRLSRKNSVTTGRIYENVIRKERRGDYLGATVQVIPHITDEIRRCIDEATAGFDVALIEIGGTVGDIESLPFLEAIRQVRTERGAEKAMFMHLTLVPYIAAAGELKTKPTQHSVKELRSIGIQPDVLLCRSEQAVPDSERRKIALFTNVSERAVISCPDIDVLYGMPLELLRQGLDELVIDQFKLRDKVAAADLSEWAAVVDAVKHPLDEVNIAVVGKYVDHQDAYKSVAEALRHGGLRQRTKVNLKWLEAQDLEGSDMSALQDIDGILVPGGFGDRGFEGKVQTSKFAREQKVPYFGICYGMQAAVVDYARHVADLDAANSTENDRQSPHPVIGLITEWRTATGEVEKRDEKSDLGGTMRLGLQEQRLKPGTLAREVYGKDVVAERHRHRYEFNNRYRTQLEDAGLVISGKSMDDTLVEVVELPRDTHPWFLACQAHPEFLSTPRDGHPLFIGFVRAAREKKAGGKLLKEARA.

The tract at residues 1-265 is amidoligase domain; it reads MTPLIFVTGG…DELVIDQFKL (265 aa). Ser-13 serves as a coordination point for CTP. Ser-13 serves as a coordination point for UTP. Residues 14-19 and Asp-71 each bind ATP; that span reads SLGKGI. Residues Asp-71 and Glu-139 each coordinate Mg(2+). Residues 146–148, 186–191, and Lys-222 contribute to the CTP site; these read DIE and KTKPTQ. UTP contacts are provided by residues 186–191 and Lys-222; that span reads KTKPTQ. Residues 292 to 545 enclose the Glutamine amidotransferase type-1 domain; that stretch reads NIAVVGKYVD…VRAAREKKAG (254 aa). Gly-353 contributes to the L-glutamine binding site. The active-site Nucleophile; for glutamine hydrolysis is the Cys-380. L-glutamine contacts are provided by residues 381–384, Glu-404, and Arg-471; that span reads YGMQ. Residues His-518 and Glu-520 contribute to the active site.

This sequence belongs to the CTP synthase family. As to quaternary structure, homotetramer.

It carries out the reaction UTP + L-glutamine + ATP + H2O = CTP + L-glutamate + ADP + phosphate + 2 H(+). The enzyme catalyses L-glutamine + H2O = L-glutamate + NH4(+). The catalysed reaction is UTP + NH4(+) + ATP = CTP + ADP + phosphate + 2 H(+). Its pathway is pyrimidine metabolism; CTP biosynthesis via de novo pathway; CTP from UDP: step 2/2. Allosterically activated by GTP, when glutamine is the substrate; GTP has no effect on the reaction when ammonia is the substrate. The allosteric effector GTP functions by stabilizing the protein conformation that binds the tetrahedral intermediate(s) formed during glutamine hydrolysis. Inhibited by the product CTP, via allosteric rather than competitive inhibition. Its function is as follows. Catalyzes the ATP-dependent amination of UTP to CTP with either L-glutamine or ammonia as the source of nitrogen. Regulates intracellular CTP levels through interactions with the four ribonucleotide triphosphates. The chain is CTP synthase from Xanthomonas axonopodis pv. citri (strain 306).